Here is a 597-residue protein sequence, read N- to C-terminus: Phosphoinositide phosphatase SAC7 (597 aa).

The 329-residue stretch at 130-458 (LSVAEKTTGL…GDEISIQYSG (329 aa)) folds into the SAC domain. The Phosphatase catalytic core signature appears at 393–404 (RSNCIDCLDRTN). The next 2 membrane-spanning stretches (helical) occupy residues 528 to 548 (AVAN…FATM) and 559 to 579 (HKHL…AALV).

Ubiquitous.

The protein localises to the endoplasmic reticulum membrane. Its subcellular location is the cytoplasmic vesicle membrane. Its function is as follows. Phosphoinositide phosphatase that preferentially hydrolyzes PtdIns(4)P. Regulates the accumulation of PtdIns(4)P on membrane compartments at the tips of growing root hairs leading to proper root hair development. This chain is Phosphoinositide phosphatase SAC7 (SAC7), found in Arabidopsis thaliana (Mouse-ear cress).